A 674-amino-acid polypeptide reads, in one-letter code: tRNA wybutosine-synthesizing protein 4 (674 aa).

Residues Arg84, Gly109, Asp140, 184-185 (DL), and Glu212 contribute to the S-adenosyl-L-methionine site.

This sequence belongs to the methyltransferase superfamily. LCMT family.

The enzyme catalyses 7-[(3S)-3-amino-3-carboxypropyl]wyosine(37) in tRNA(Phe) + S-adenosyl-L-methionine = 7-[(3S)-(3-amino-3-methoxycarbonyl)propyl]wyosine(37) in tRNA(Phe) + S-adenosyl-L-homocysteine. It catalyses the reaction 7-[(3S)-(3-amino-3-methoxycarbonyl)propyl]wyosine(37) in tRNA(Phe) + S-adenosyl-L-methionine + CO2 = wybutosine(37) in tRNA(Phe) + S-adenosyl-L-homocysteine + 2 H(+). It functions in the pathway tRNA modification; wybutosine-tRNA(Phe) biosynthesis. Its function is as follows. Probable S-adenosyl-L-methionine-dependent methyltransferase that acts as a component of the wybutosine biosynthesis pathway. Wybutosine is a hyper modified guanosine with a tricyclic base found at the 3'-position adjacent to the anticodon of eukaryotic phenylalanine tRNA. May methylate the carboxyl group of leucine residues to form alpha-leucine ester residues. This Candida glabrata (strain ATCC 2001 / BCRC 20586 / JCM 3761 / NBRC 0622 / NRRL Y-65 / CBS 138) (Yeast) protein is tRNA wybutosine-synthesizing protein 4 (PPM2).